A 166-amino-acid polypeptide reads, in one-letter code: UPF0304 protein VFMJ11_1926 (166 aa).

This sequence belongs to the UPF0304 family.

The chain is UPF0304 protein VFMJ11_1926 from Aliivibrio fischeri (strain MJ11) (Vibrio fischeri).